We begin with the raw amino-acid sequence, 275 residues long: 2,3,4,5-tetrahydropyridine-2,6-dicarboxylate N-succinyltransferase (275 aa).

Residues R106 and D143 each contribute to the substrate site.

This sequence belongs to the transferase hexapeptide repeat family. Homotrimer.

The protein localises to the cytoplasm. The enzyme catalyses (S)-2,3,4,5-tetrahydrodipicolinate + succinyl-CoA + H2O = (S)-2-succinylamino-6-oxoheptanedioate + CoA. It participates in amino-acid biosynthesis; L-lysine biosynthesis via DAP pathway; LL-2,6-diaminopimelate from (S)-tetrahydrodipicolinate (succinylase route): step 1/3. This is 2,3,4,5-tetrahydropyridine-2,6-dicarboxylate N-succinyltransferase from Burkholderia ambifaria (strain ATCC BAA-244 / DSM 16087 / CCUG 44356 / LMG 19182 / AMMD) (Burkholderia cepacia (strain AMMD)).